Consider the following 221-residue polypeptide: Membrane-bound lytic murein transglycosylase E (221 aa).

Belongs to the transglycosylase Slt family.

It catalyses the reaction Exolytic cleavage of the (1-&gt;4)-beta-glycosidic linkage between N-acetylmuramic acid (MurNAc) and N-acetylglucosamine (GlcNAc) residues in peptidoglycan, from either the reducing or the non-reducing ends of the peptidoglycan chains, with concomitant formation of a 1,6-anhydrobond in the MurNAc residue.. Functionally, murein-degrading enzyme. May play a role in recycling of muropeptides during cell elongation and/or cell division. This chain is Membrane-bound lytic murein transglycosylase E (mltE), found in Buchnera aphidicola subsp. Acyrthosiphon pisum (strain APS) (Acyrthosiphon pisum symbiotic bacterium).